A 405-amino-acid chain; its full sequence is uncharacterized protein (405 aa).

Helical transmembrane passes span 19–39, 47–67, 85–105, 129–149, 157–177, 178–198, 224–244, 252–272, 283–303, 309–329, 344–364, and 366–386; these read ILSI…PLAV, VMGF…FATL, IVVF…TAGL, SFAG…LHIG, IVTY…YHWG, GLQA…LLAI, GMAL…ITLF, GAAF…LLFP, VAMI…VATM, IGVL…GVVA, TYTV…GLVM, and WAGV…ALLL.

Belongs to the major facilitator superfamily. YhhS family.

Its subcellular location is the cell inner membrane. This is an uncharacterized protein from Escherichia coli O157:H7.